The primary structure comprises 305 residues: Aurasperone B biosynthesis cluster protein A (305 aa).

The first 26 residues, 1–26 (MSIFFSIRFWPAAISAAILWLPQVLG), serve as a signal peptide directing secretion. 8 N-linked (GlcNAc...) asparagine glycosylation sites follow: asparagine 29, asparagine 34, asparagine 64, asparagine 83, asparagine 132, asparagine 183, asparagine 218, and asparagine 288.

Belongs to the bfoA family.

Part of the gene cluster that mediates the biosynthesis of aurasperone B, a dimeric gamma-naphthopyrone. The first step in the biosynthesis of aurasperone B is the production of gamma-naphthopyrone precursor YWA1 by the non-reducing polyketide synthase albA, via condensation of one acetyl-CoA starter unit with 6 malonyl-CoA units. YWA1 is then methylated by aunE at position C-6 to yield foncesin which is further methylated at position C-8 by aunD to produce fonsecin B. A key enzyme in the biosynthetic pathway is the cytochrome P450 monooxygenase aunB which catalyzes the oxidative dimerization of fonsecin B to aurasperone B. AunB also catalyzes the oxidative dimerization of rubrofusarin B into aurasperone A. The sequence is that of Aurasperone B biosynthesis cluster protein A from Aspergillus niger (strain ATCC MYA-4892 / CBS 513.88 / FGSC A1513).